Reading from the N-terminus, the 477-residue chain is Lactate utilization protein B (477 aa).

2 4Fe-4S ferredoxin-type domains span residues 304–334 (GTQFQSILQCIRCAACVNVCPVYRQTGGHSY) and 353–382 (YDTYKELPYASTLCGACTEACPVKIPLHDL). The [4Fe-4S] cluster site is built by Cys313, Cys316, Cys319, Cys323, Cys366, Cys369, and Cys373. A disordered region spans residues 443–463 (GPKPLQAWTNSRDFPMPDDEN).

It belongs to the LutB/YkgF family.

Its function is as follows. Is involved in L-lactate degradation and allows cells to grow with lactate as the sole carbon source. Has probably a role as an electron transporter during oxidation of L-lactate. The polypeptide is Lactate utilization protein B (Macrococcus caseolyticus (strain JCSC5402) (Macrococcoides caseolyticum)).